We begin with the raw amino-acid sequence, 251 residues long: 1-(5-phosphoribosyl)-5-[(5-phosphoribosylamino)methylideneamino] imidazole-4-carboxamide isomerase (251 aa).

D8 (proton acceptor) is an active-site residue. D131 acts as the Proton donor in catalysis.

This sequence belongs to the HisA/HisF family.

It localises to the cytoplasm. The enzyme catalyses 1-(5-phospho-beta-D-ribosyl)-5-[(5-phospho-beta-D-ribosylamino)methylideneamino]imidazole-4-carboxamide = 5-[(5-phospho-1-deoxy-D-ribulos-1-ylimino)methylamino]-1-(5-phospho-beta-D-ribosyl)imidazole-4-carboxamide. It participates in amino-acid biosynthesis; L-histidine biosynthesis; L-histidine from 5-phospho-alpha-D-ribose 1-diphosphate: step 4/9. This Azoarcus sp. (strain BH72) protein is 1-(5-phosphoribosyl)-5-[(5-phosphoribosylamino)methylideneamino] imidazole-4-carboxamide isomerase.